Reading from the N-terminus, the 275-residue chain is 2,3,4,5-tetrahydropyridine-2,6-dicarboxylate N-succinyltransferase (275 aa).

Residues arginine 106 and aspartate 143 each coordinate substrate.

Belongs to the transferase hexapeptide repeat family. As to quaternary structure, homotrimer.

The protein localises to the cytoplasm. The enzyme catalyses (S)-2,3,4,5-tetrahydrodipicolinate + succinyl-CoA + H2O = (S)-2-succinylamino-6-oxoheptanedioate + CoA. It participates in amino-acid biosynthesis; L-lysine biosynthesis via DAP pathway; LL-2,6-diaminopimelate from (S)-tetrahydrodipicolinate (succinylase route): step 1/3. This chain is 2,3,4,5-tetrahydropyridine-2,6-dicarboxylate N-succinyltransferase, found in Burkholderia mallei (strain NCTC 10247).